The sequence spans 503 residues: Opine oxidase subunit A (503 aa).

It to T-protein and to dimethylglycine dehydrogenase. As to quaternary structure, heterodimer of a subunit A and a subunit B.

It functions in the pathway opine metabolism; octopine degradation. Its function is as follows. Oxidative cleavage of octopine into L-arginine and pyruvate. This is Opine oxidase subunit A (ooxA) from Agrobacterium tumefaciens (strain Ach5).